The following is a 110-amino-acid chain: UPF0122 protein GK1195 (110 aa).

The protein belongs to the UPF0122 family.

Might take part in the signal recognition particle (SRP) pathway. This is inferred from the conservation of its genetic proximity to ftsY/ffh. May be a regulatory protein. This is UPF0122 protein GK1195 from Geobacillus kaustophilus (strain HTA426).